Here is a 596-residue protein sequence, read N- to C-terminus: MSSKKEYVVGIDLGTTNSVIAWMKPDSSVEVIPNAEGARTTPSIVAFSKSGEILVGEPAKRQLILNSDRTIKSIKRKMGTDYKVKIDDKEYSPQEISAFILKKLKKDAEEYLGGEIKRAVITCPAYFNDAQRQATKEAGIIAGFDVLRIINEPTAAALAYGLDRKGKEEKVLVYDLGGGTFDVSILEIGDGVIQVIATSGNNHLGGDDFDQRIIDWLAEEFKKQHGVDLKEDKQALQRLRDAAEKAKIELSSKLETDISLPYITATAEGPLHLEMRLTRSMFESLTRDLVEMTRKPIEQALSDAKLKPEDIDEIILVGGMTRVPMIQNFIKEIFGKEPNKRVNPDEAVAMGAAIQAAILAGEEGAQGKDIVLVDVTPLTLGIEVKGGLFEPIIPRNSTIPIKKSKVFTTAEDGQTEVEIRVFQGERPIAADNILLGSFRLVGIPPAPRGVPQIEVTFDIDSDGIVHVSAKDLGTGKEQTMVVSGRHKLSEEDINKIIEDAKKYEEQDKRRKEEVELKNKADDLAYYIDKSLKEYGDKIPQDEKQKLETLVNDLRDAINKNDIARIKMLFDELEREKTKIGEYIYKQNQGNQQAENQ.

A Phosphothreonine; by autocatalysis modification is found at threonine 180.

The protein belongs to the heat shock protein 70 family.

Functionally, acts as a chaperone. The chain is Chaperone protein DnaK from Thermosipho melanesiensis (strain DSM 12029 / CIP 104789 / BI429).